Here is a 268-residue protein sequence, read N- to C-terminus: Tryptophan synthase alpha chain (268 aa).

Catalysis depends on proton acceptor residues glutamate 49 and aspartate 60.

This sequence belongs to the TrpA family. In terms of assembly, tetramer of two alpha and two beta chains.

It carries out the reaction (1S,2R)-1-C-(indol-3-yl)glycerol 3-phosphate + L-serine = D-glyceraldehyde 3-phosphate + L-tryptophan + H2O. The protein operates within amino-acid biosynthesis; L-tryptophan biosynthesis; L-tryptophan from chorismate: step 5/5. Its function is as follows. The alpha subunit is responsible for the aldol cleavage of indoleglycerol phosphate to indole and glyceraldehyde 3-phosphate. In Photorhabdus laumondii subsp. laumondii (strain DSM 15139 / CIP 105565 / TT01) (Photorhabdus luminescens subsp. laumondii), this protein is Tryptophan synthase alpha chain.